The sequence spans 182 residues: CDP-diacylglycerol--glycerol-3-phosphate 3-phosphatidyltransferase (182 aa).

Topologically, residues 2 to 12 are cytoplasmic; that stretch reads QFNIPTLLTLF. A helical membrane pass occupies residues 13-37; the sequence is RVILIPFFVLVFYLPVTWSPFAAAL. The Periplasmic segment spans residues 38-60; sequence IFCVAAVTDWFDGFLARRWNQST. The helical transmembrane segment at 61 to 81 threads the bilayer; sequence RFGAFLDPVADKVLVAIAMVL. Residues 82–86 are Cytoplasmic-facing; the sequence is VTEHY. A helical membrane pass occupies residues 87-107; it reads HSWWVTLPAATMIAREIIISA. At 108-145 the chain is on the periplasmic side; it reads LREWMAELGKRSSVAVSWIGKVKTTAQMVALAWLLWRP. Residues 146 to 168 traverse the membrane as a helical segment; it reads NIWVEYVGIALFFVAAVLTLWSM. Residues 169–181 lie on the Cytoplasmic side of the membrane; it reads LQYLSAARADLLD.

This sequence belongs to the CDP-alcohol phosphatidyltransferase class-I family.

It is found in the cell inner membrane. It carries out the reaction a CDP-1,2-diacyl-sn-glycerol + sn-glycerol 3-phosphate = a 1,2-diacyl-sn-glycero-3-phospho-(1'-sn-glycero-3'-phosphate) + CMP + H(+). The protein operates within phospholipid metabolism; phosphatidylglycerol biosynthesis; phosphatidylglycerol from CDP-diacylglycerol: step 1/2. Its function is as follows. Catalyzes the conversion of cytidine diphosphate diacylglycerol (CDP-DG) and glycerol 3-phosphate into phosphatidylglycerol. Essential for the synthesis of anionic phospholipids, thereby playing a role in balancing the ratio of zwitterionic and anionic phospholipids, which is thought to be important for normal membrane function. The sequence is that of CDP-diacylglycerol--glycerol-3-phosphate 3-phosphatidyltransferase from Shigella boydii serotype 4 (strain Sb227).